The following is a 460-amino-acid chain: Ammonium transporter Rh type B (460 aa).

Over 1–10 (MTGYSTNMRI) the chain is Cytoplasmic. A helical membrane pass occupies residues 11–31 (KLPVFCLLLEFITIILFAVFV). Over 32–62 (RYDHESDAKQWHDEMRNHSVQNAENDFYFRY) the chain is Extracellular. A glycan (N-linked (GlcNAc...) asparagine) is linked at N48. A helical membrane pass occupies residues 63 to 83 (PSFQDVHVMIFIGFGFLMTFL). At 84–87 (KRYG) the chain is on the cytoplasmic side. The chain crosses the membrane as a helical span at residues 88–108 (FSSVAFNFLIAAFGLQWSTLI). At 109–125 (QGFFHGFHDGKIHVGIE) the chain is on the extracellular side. Residues 126 to 146 (SMINADFCTGAVLISFGAVLG) form a helical membrane-spanning segment. Residues 147 to 150 (KTSP) lie on the Cytoplasmic side of the membrane. The helical transmembrane segment at 151-171 (VQLIVMTLIEVTLFGINEYII) threads the bilayer. Residues 172–179 (LNIVGAKD) lie on the Extracellular side of the membrane. The chain crosses the membrane as a helical span at residues 180–202 (AGGSMTIHTFGAYFGLIVSRVLY). Residues 203-220 (RDDLEKSRQREGSVYHSD) are Cytoplasmic-facing. The helical transmembrane segment at 221–241 (LFAMIGTIYLWMFWPSFNSAI) threads the bilayer. Over 242–252 (TAHGDDQHRTV) the chain is Extracellular. Residues 253 to 273 (MNTYYSLAACTLATFGFSALL) traverse the membrane as a helical segment. The Cytoplasmic segment spans residues 274 to 283 (NGEGKLDMVH). A helical membrane pass occupies residues 284–304 (IQNAALAGGVAVGTSGEMMLT). Position 305 (P305) is a topological domain, extracellular. A helical transmembrane segment spans residues 306–326 (FGAMIAGTLAGMISVLGYKYL). Topologically, residues 327–347 (TPVLDSKLKIQDTCGVHNLHG) are cytoplasmic. Residues 348-368 (MPGILGALIGAIVALFATAEI) form a helical membrane-spanning segment. The Extracellular portion of the chain corresponds to 369-394 (YGAGMEDVFPLISDGSRTAKQQSLYQ). The chain crosses the membrane as a helical span at residues 395–415 (FLALLVALGFAILGGLVVGFI). At 416-460 (LKLPIFGTPSDAECFEDAVYWEVPGGEGHQQLTVVINNEDPDTQA) the chain is on the cytoplasmic side.

This sequence belongs to the ammonium transporter (TC 2.A.49) family. Rh subfamily.

The protein resides in the basolateral cell membrane. It is found in the cytoplasmic vesicle membrane. Functions as a specific ammonium transporter. In Xenopus tropicalis (Western clawed frog), this protein is Ammonium transporter Rh type B (rhbg).